Here is a 429-residue protein sequence, read N- to C-terminus: Adenylosuccinate synthetase (429 aa).

GTP is bound by residues 13-19 (GDEGKGK) and 41-43 (GHT). Asp14 serves as the catalytic Proton acceptor. Residues Asp14 and Gly41 each contribute to the Mg(2+) site. IMP is bound by residues 14-17 (DEGK), 39-42 (NAGH), Thr130, Arg144, Gln224, Thr239, and Arg303. Residue His42 is the Proton donor of the active site. 299-305 (ATTGRAR) provides a ligand contact to substrate. Residues Arg305, 331-333 (KLD), and 412-414 (STG) each bind GTP.

The protein belongs to the adenylosuccinate synthetase family. Homodimer. Mg(2+) serves as cofactor.

Its subcellular location is the cytoplasm. The catalysed reaction is IMP + L-aspartate + GTP = N(6)-(1,2-dicarboxyethyl)-AMP + GDP + phosphate + 2 H(+). The protein operates within purine metabolism; AMP biosynthesis via de novo pathway; AMP from IMP: step 1/2. Functionally, plays an important role in the de novo pathway of purine nucleotide biosynthesis. Catalyzes the first committed step in the biosynthesis of AMP from IMP. The protein is Adenylosuccinate synthetase of Psychrobacter cryohalolentis (strain ATCC BAA-1226 / DSM 17306 / VKM B-2378 / K5).